A 631-amino-acid polypeptide reads, in one-letter code: Golgin subfamily A member 8A (631 aa).

Residues Met-1–Arg-20 are compositionally biased toward basic and acidic residues. 4 disordered regions span residues Met-1–Ala-103, Lys-127–Gln-154, Thr-426–Gly-447, and Pro-488–Gly-520. Residues Ser-78–Leu-92 are compositionally biased toward low complexity. Positions His-93–Ala-103 are enriched in polar residues. Residues Ser-110–Gly-468 are a coiled coil. A compositionally biased stretch (basic and acidic residues) spans Lys-128 to Glu-152. Positions Pro-497–Gly-510 are enriched in gly residues. Residues Ala-519 to Arg-631 are golgi-targeting domain.

Belongs to the GOLGA8 family.

It localises to the golgi apparatus. Its subcellular location is the golgi stack membrane. Its function is as follows. May be involved in maintaining Golgi structure. The sequence is that of Golgin subfamily A member 8A (GOLGA8A) from Homo sapiens (Human).